A 293-amino-acid chain; its full sequence is uncharacterized protein (293 aa).

Residues 55-77 (IVLAKEIFAVAFFSLGMSCLLMA) traverse the membrane as a helical segment.

The protein localises to the membrane. This is an uncharacterized protein from Caenorhabditis elegans.